Here is a 512-residue protein sequence, read N- to C-terminus: Phospho-2-dehydro-3-deoxyheptonate aldolase 2, chloroplastic (512 aa).

The N-terminal 57 residues, 1 to 57 (MALTATATTRGGSALPNSCLQTPKFQSLQKPTFISSFPTNKKTKPRTKHISAVQSPP), are a transit peptide targeting the chloroplast. Residues 37–57 (FPTNKKTKPRTKHISAVQSPP) are disordered. C126 provides a ligand contact to Mn(2+). Residues R165, 324–325 (ER), K347, and R378 contribute to the substrate site. The Mn(2+) site is built by H410, E452, and D482.

It belongs to the class-II DAHP synthase family. In terms of assembly, homodimer. Mn(2+) is required as a cofactor. Mostly expressed in leaves and stems, and, to a lower extent, in roots, stigmas, anthers, petal tubes, petal limbs and sepals.

It localises to the plastid. The protein localises to the chloroplast. The enzyme catalyses D-erythrose 4-phosphate + phosphoenolpyruvate + H2O = 7-phospho-2-dehydro-3-deoxy-D-arabino-heptonate + phosphate. The protein operates within metabolic intermediate biosynthesis; chorismate biosynthesis; chorismate from D-erythrose 4-phosphate and phosphoenolpyruvate: step 1/7. Functionally, involved in the production of volatile organic compounds (VOCs). Catalyzes an aldol-like condensation reaction between phosphoenolpyruvate (PEP) and D-erythrose 4-phosphate (E4P) to generate 3-deoxy-D-arabino-heptulosonate 7-phosphate (DAH7P) and inorganic phosphate. The polypeptide is Phospho-2-dehydro-3-deoxyheptonate aldolase 2, chloroplastic (Petunia hybrida (Petunia)).